A 425-amino-acid chain; its full sequence is Imidazolonepropionase (425 aa).

2 residues coordinate Fe(3+): His-82 and His-84. Zn(2+) is bound by residues His-82 and His-84. 4-imidazolone-5-propanoate-binding residues include Arg-91, Tyr-154, and His-187. Residue Tyr-154 coordinates N-formimidoyl-L-glutamate. His-253 serves as a coordination point for Fe(3+). Zn(2+) is bound at residue His-253. Glu-256 contributes to the 4-imidazolone-5-propanoate binding site. Residue Asp-328 participates in Fe(3+) binding. Asp-328 contacts Zn(2+). Residues Asn-330 and Gly-332 each contribute to the N-formimidoyl-L-glutamate site. Residue Ser-333 coordinates 4-imidazolone-5-propanoate.

Belongs to the metallo-dependent hydrolases superfamily. HutI family. Requires Zn(2+) as cofactor. Fe(3+) serves as cofactor.

It localises to the cytoplasm. The catalysed reaction is 4-imidazolone-5-propanoate + H2O = N-formimidoyl-L-glutamate. It participates in amino-acid degradation; L-histidine degradation into L-glutamate; N-formimidoyl-L-glutamate from L-histidine: step 3/3. Functionally, catalyzes the hydrolytic cleavage of the carbon-nitrogen bond in imidazolone-5-propanoate to yield N-formimidoyl-L-glutamate. It is the third step in the universal histidine degradation pathway. The polypeptide is Imidazolonepropionase (Symbiobacterium thermophilum (strain DSM 24528 / JCM 14929 / IAM 14863 / T)).